The chain runs to 104 residues: UPF0125 protein PSPTO_4512 (104 aa).

It belongs to the UPF0125 (RnfH) family.

This Pseudomonas syringae pv. tomato (strain ATCC BAA-871 / DC3000) protein is UPF0125 protein PSPTO_4512.